A 1094-amino-acid polypeptide reads, in one-letter code: DNA polymerase delta catalytic subunit (1094 aa).

Zn(2+) contacts are provided by Cys1003, Cys1006, Cys1016, and Cys1019. The CysA-type zinc-finger motif lies at 1003–1019; sequence CIGCNSSIKKPPLCNHC. [4Fe-4S] cluster-binding residues include Cys1049, Cys1052, Cys1062, and Cys1067. The CysB motif signature appears at 1049–1067; the sequence is CQRCQGNLHVDVICMNRDC.

It belongs to the DNA polymerase type-B family. As to quaternary structure, heterodimer composed of a catalytic subunit POLD and a small regulatory subunit. Requires [4Fe-4S] cluster as cofactor. The cofactor is Mg(2+).

Its subcellular location is the nucleus. The catalysed reaction is DNA(n) + a 2'-deoxyribonucleoside 5'-triphosphate = DNA(n+1) + diphosphate. Its activity is regulated as follows. The small regulatory subunit delta and PCNA1 increase POLD catalytic activity. Its function is as follows. This polymerase possesses two enzymatic activities: DNA synthesis (polymerase) and an exonucleolytic activity that degrades single-stranded DNA in the 3'- to 5'-direction. This chain is DNA polymerase delta catalytic subunit (POLD), found in Plasmodium falciparum (isolate K1 / Thailand).